We begin with the raw amino-acid sequence, 468 residues long: Methylenetetrahydrofolate--tRNA-(uracil-5-)-methyltransferase TrmFO (468 aa).

13–18 (GGGLAG) provides a ligand contact to FAD.

This sequence belongs to the MnmG family. TrmFO subfamily. FAD is required as a cofactor.

It localises to the cytoplasm. It catalyses the reaction uridine(54) in tRNA + (6R)-5,10-methylene-5,6,7,8-tetrahydrofolate + NADH + H(+) = 5-methyluridine(54) in tRNA + (6S)-5,6,7,8-tetrahydrofolate + NAD(+). The catalysed reaction is uridine(54) in tRNA + (6R)-5,10-methylene-5,6,7,8-tetrahydrofolate + NADPH + H(+) = 5-methyluridine(54) in tRNA + (6S)-5,6,7,8-tetrahydrofolate + NADP(+). Its function is as follows. Catalyzes the folate-dependent formation of 5-methyl-uridine at position 54 (M-5-U54) in all tRNAs. This is Methylenetetrahydrofolate--tRNA-(uracil-5-)-methyltransferase TrmFO from Bartonella henselae (strain ATCC 49882 / DSM 28221 / CCUG 30454 / Houston 1) (Rochalimaea henselae).